Reading from the N-terminus, the 138-residue chain is Flagellar basal body rod protein FlgB (138 aa).

It belongs to the flagella basal body rod proteins family. As to quaternary structure, the basal body constitutes a major portion of the flagellar organelle and consists of a number of rings mounted on a central rod. In Gram-negative bacteria, at least four rings, L, P, S and M are present, whereas Gram-positive bacteria lack the L and P rings. The rod consists of about 26 subunits of FlgG in the distal portion, and FlgB, FlgC and FlgF build up the proximal portion of the rod with about 6 subunits each. Rod assembly occurs by export via the flagellum-specific pathway of its constituent proteins and by their incorporation into the rod structure in the probable order of FlgB, FlgC, FlgF and FlgG. Another protein, FliE, also assembles onto the stable rod structure. Interacts with FliE and peptidoglycan hydrolase FlgJ (via N-terminus), which seems to function as a scaffold or cap for rod assembly.

It localises to the bacterial flagellum basal body. Functionally, structural component of flagellum, the bacterial motility apparatus. Part of the rod structure of flagellar basal body. This Salmonella typhimurium (strain LT2 / SGSC1412 / ATCC 700720) protein is Flagellar basal body rod protein FlgB (flgB).